Here is a 434-residue protein sequence, read N- to C-terminus: Cullin-like protein 5 (434 aa).

The interval 1-34 is disordered; sequence MKRSISPDPFSSTKSPKLVHHSPDDGGAEGNPYR.

This sequence belongs to the cullin family.

The chain is Cullin-like protein 5 from Arabidopsis thaliana (Mouse-ear cress).